The sequence spans 348 residues: MVRTINETFLKACRGERTDYVPAWYMRQAGRSQPEYRKIKEKYSLFEITHNPELCAYVTKLPVDQYNVDAAILYKDIMSPLPAIGVDVEIKSGIGPVIDNPIRSLQDVEKLGEINPEDDVPYILDTIRLLTTEMLDVPLIGFSGAPFTLASYMIEGGPSRNYHNTKAFMYAEPKAWFALMDKLADMVITYLKAQINAGAKAVQIFDSWVGTVNVADYRVFIKPAMERIFAEVRTMGVPMIMHGVGAAHLVNEWHDLPLDVVGLDWRLPIEEARARGVHKAVQGNMDPSFLLAPWSVIEEHVKGILDQGMKQPGYIFNLGHGVFPEVNPDTLKRLTTFIHEYSKGQLAK.

Residues 27 to 31 (RQAGR), Phe-46, Asp-76, Tyr-152, Ser-207, and His-320 each bind substrate.

This sequence belongs to the uroporphyrinogen decarboxylase family. As to quaternary structure, homodimer.

It is found in the cytoplasm. The enzyme catalyses uroporphyrinogen III + 4 H(+) = coproporphyrinogen III + 4 CO2. The protein operates within porphyrin-containing compound metabolism; protoporphyrin-IX biosynthesis; coproporphyrinogen-III from 5-aminolevulinate: step 4/4. In terms of biological role, catalyzes the decarboxylation of four acetate groups of uroporphyrinogen-III to yield coproporphyrinogen-III. This Bacillus thuringiensis (strain Al Hakam) protein is Uroporphyrinogen decarboxylase.